The chain runs to 139 residues: NADPH-dependent 7-cyano-7-deazaguanine reductase (139 aa).

Cys34 functions as the Thioimide intermediate in the catalytic mechanism. Asp41 (proton donor) is an active-site residue. Substrate contacts are provided by residues 56–58 and 75–76; these read IEL and HE.

It belongs to the GTP cyclohydrolase I family. QueF type 1 subfamily.

It is found in the cytoplasm. The enzyme catalyses 7-aminomethyl-7-carbaguanine + 2 NADP(+) = 7-cyano-7-deazaguanine + 2 NADPH + 3 H(+). Its pathway is tRNA modification; tRNA-queuosine biosynthesis. Functionally, catalyzes the NADPH-dependent reduction of 7-cyano-7-deazaguanine (preQ0) to 7-aminomethyl-7-deazaguanine (preQ1). This chain is NADPH-dependent 7-cyano-7-deazaguanine reductase, found in Nitrosomonas eutropha (strain DSM 101675 / C91 / Nm57).